We begin with the raw amino-acid sequence, 100 residues long: Urease subunit gamma (100 aa).

Belongs to the urease gamma subunit family. Heterotrimer of UreA (gamma), UreB (beta) and UreC (alpha) subunits. Three heterotrimers associate to form the active enzyme.

It is found in the cytoplasm. It carries out the reaction urea + 2 H2O + H(+) = hydrogencarbonate + 2 NH4(+). It functions in the pathway nitrogen metabolism; urea degradation; CO(2) and NH(3) from urea (urease route): step 1/1. This is Urease subunit gamma from Pseudomonas entomophila (strain L48).